The chain runs to 302 residues: Ribosome-binding factor PSRP1, chloroplastic (302 aa).

Residues 1–66 constitute a chloroplast transit peptide; the sequence is MATLCTSAIN…SRNKPNVVCM (66 aa).

Binds to the mRNA channel of the chloroplast small ribosomal subunit and interacts with 16S sRNA nucleotides at the A-site and P-site.

It localises to the plastid. The protein localises to the chloroplast stroma. Its function is as follows. Ribosome-binding factor involved in light- and temperature-dependent control of protein synthesis. Interacts with 16S sRNA nucleotides at the A-site and P-site, where it protects the decoding center and inhibits translation by preventing tRNA binding. Stabilizes 70S ribosomes against dissociation. May be recycled by the combined action of ribosome-recycling factor (RRF) and EF-G. In Spinacia oleracea (Spinach), this protein is Ribosome-binding factor PSRP1, chloroplastic (PSRP1).